A 519-amino-acid chain; its full sequence is DNA-directed RNA polymerase subunit Rpo2N (519 aa).

The protein belongs to the RNA polymerase beta chain family. As to quaternary structure, part of the RNA polymerase complex.

It localises to the cytoplasm. The catalysed reaction is RNA(n) + a ribonucleoside 5'-triphosphate = RNA(n+1) + diphosphate. Functionally, DNA-dependent RNA polymerase (RNAP) catalyzes the transcription of DNA into RNA using the four ribonucleoside triphosphates as substrates. The Rpo2 subunit (Rpo2N and Rpo2C in this organism) is implicated in DNA promoter recognition and in nucleotide binding. The sequence is that of DNA-directed RNA polymerase subunit Rpo2N from Methanothermobacter thermautotrophicus (strain ATCC 29096 / DSM 1053 / JCM 10044 / NBRC 100330 / Delta H) (Methanobacterium thermoautotrophicum).